A 66-amino-acid chain; its full sequence is Large ribosomal subunit protein bL33 (66 aa).

Belongs to the bacterial ribosomal protein bL33 family.

This chain is Large ribosomal subunit protein bL33, found in Prochlorococcus marinus (strain MIT 9303).